The sequence spans 457 residues: L-asparaginase-like protein GA18140 (457 aa).

Positions 1–20 (MRYLCRAQLLSLLLLPLLKA) are cleaved as a signal peptide. Disulfide bonds link Cys72/Cys78, Cys172/Cys188, and Cys327/Cys354.

The protein belongs to the Ntn-hydrolase family.

This is L-asparaginase-like protein GA18140 from Drosophila pseudoobscura pseudoobscura (Fruit fly).